A 190-amino-acid polypeptide reads, in one-letter code: Segregation and condensation protein B (190 aa).

The protein belongs to the ScpB family. In terms of assembly, homodimer. Homodimerization may be required to stabilize the binding of ScpA to the Smc head domains. Component of a cohesin-like complex composed of ScpA, ScpB and the Smc homodimer, in which ScpA and ScpB bind to the head domain of Smc. The presence of the three proteins is required for the association of the complex with DNA.

Its subcellular location is the cytoplasm. Participates in chromosomal partition during cell division. May act via the formation of a condensin-like complex containing Smc and ScpA that pull DNA away from mid-cell into both cell halves. This chain is Segregation and condensation protein B, found in Bacillus cereus (strain B4264).